A 604-amino-acid polypeptide reads, in one-letter code: Proline--tRNA ligase (604 aa).

The protein belongs to the class-II aminoacyl-tRNA synthetase family. ProS type 1 subfamily. Homodimer.

The protein resides in the cytoplasm. The enzyme catalyses tRNA(Pro) + L-proline + ATP = L-prolyl-tRNA(Pro) + AMP + diphosphate. Its function is as follows. Catalyzes the attachment of proline to tRNA(Pro) in a two-step reaction: proline is first activated by ATP to form Pro-AMP and then transferred to the acceptor end of tRNA(Pro). As ProRS can inadvertently accommodate and process non-cognate amino acids such as alanine and cysteine, to avoid such errors it has two additional distinct editing activities against alanine. One activity is designated as 'pretransfer' editing and involves the tRNA(Pro)-independent hydrolysis of activated Ala-AMP. The other activity is designated 'posttransfer' editing and involves deacylation of mischarged Ala-tRNA(Pro). The misacylated Cys-tRNA(Pro) is not edited by ProRS. This chain is Proline--tRNA ligase, found in Trichormus variabilis (strain ATCC 29413 / PCC 7937) (Anabaena variabilis).